The primary structure comprises 409 residues: DNA primase small subunit (409 aa).

Residues glutamate 46, aspartate 111, and aspartate 113 contribute to the active site. A Zinc knuckle motif motif is present at residues 123–133; it reads CCSGAQVCSKC.

It belongs to the eukaryotic-type primase small subunit family. As to quaternary structure, DNA polymerase alpha:primase is a four subunit enzyme complex, which is assembled throughout the cell cycle, and consists of the two DNA polymerase subunits A POL1 and B POL12, and the DNA primase large PRI2 and small PRI1 subunits.

Its function is as follows. DNA primase is the polymerase that synthesizes small RNA primers for the Okazaki fragments made during discontinuous DNA replication. In a complex with DNA polymerase alpha (DNA polymerase alpha:primase) constitutes a replicative polymerase. Both primase components participate in formation of the active center, but the ATP-binding site is exclusively located on p48. In Saccharomyces cerevisiae (strain ATCC 204508 / S288c) (Baker's yeast), this protein is DNA primase small subunit (PRI1).